The following is a 164-amino-acid chain: uncharacterized protein (164 aa).

The segment at 46 to 142 (GRSPEQKEHV…APDNSIYDTL (97 aa)) is disordered.

This is an uncharacterized protein from Caenorhabditis elegans.